Here is a 259-residue protein sequence, read N- to C-terminus: GTP cyclohydrolase FolE2 (259 aa).

This sequence belongs to the GTP cyclohydrolase IV family.

It carries out the reaction GTP + H2O = 7,8-dihydroneopterin 3'-triphosphate + formate + H(+). It participates in cofactor biosynthesis; 7,8-dihydroneopterin triphosphate biosynthesis; 7,8-dihydroneopterin triphosphate from GTP: step 1/1. In terms of biological role, converts GTP to 7,8-dihydroneopterin triphosphate. The sequence is that of GTP cyclohydrolase FolE2 from Thermosipho melanesiensis (strain DSM 12029 / CIP 104789 / BI429).